The following is a 422-amino-acid chain: Putative FBD-associated F-box protein At1g55030 (422 aa).

In terms of domain architecture, F-box spans 8–60 (TDMISQLPEPLILQILGSLPTKVAITTSVLSKQWQSHWKMMPKLEFDSFLRRL). 3 LRR repeats span residues 132 to 153 (TLETLELILNVVMDVPPSVYLK), 154 to 175 (SLKTLYLLAVDFKDDESVINLL), and 180 to 201 (NLQDLVMRRNSSSNVKTFTIAV). Positions 342-391 (EWNQPKNVPECLHHLEKFIWEGYKWKREEIEVAKYILKNTNRLKRAIFSL) constitute an FBD domain.

The chain is Putative FBD-associated F-box protein At1g55030 from Arabidopsis thaliana (Mouse-ear cress).